Here is a 362-residue protein sequence, read N- to C-terminus: Histidine biosynthesis bifunctional protein HisB (362 aa).

Residues 1–173 are histidinol-phosphatase; that stretch reads MQPTLFIDRD…TVTNCGKRPP (173 aa). The active-site Nucleophile is the Asp-8. The Mg(2+) site is built by Asp-8 and Asp-10. Asp-10 functions as the Proton donor in the catalytic mechanism. Zn(2+)-binding residues include Cys-91, His-93, Cys-99, and Cys-101. Mg(2+) is bound at residue Asp-128. An imidazoleglycerol-phosphate dehydratase region spans residues 174–362; that stretch reads RFAEVIRQTK…NEMPSSKGVL (189 aa).

In the N-terminal section; belongs to the histidinol-phosphatase family. The protein in the C-terminal section; belongs to the imidazoleglycerol-phosphate dehydratase family. Mg(2+) serves as cofactor. Zn(2+) is required as a cofactor.

It is found in the cytoplasm. It catalyses the reaction D-erythro-1-(imidazol-4-yl)glycerol 3-phosphate = 3-(imidazol-4-yl)-2-oxopropyl phosphate + H2O. The catalysed reaction is L-histidinol phosphate + H2O = L-histidinol + phosphate. It functions in the pathway amino-acid biosynthesis; L-histidine biosynthesis; L-histidine from 5-phospho-alpha-D-ribose 1-diphosphate: step 6/9. The protein operates within amino-acid biosynthesis; L-histidine biosynthesis; L-histidine from 5-phospho-alpha-D-ribose 1-diphosphate: step 8/9. This Haemophilus influenzae (strain 86-028NP) protein is Histidine biosynthesis bifunctional protein HisB.